The following is a 204-amino-acid chain: Somatotropin (204 aa).

Positions 1–17 (MDRVLLLLSVLSLGVSS) are cleaved as a signal peptide. Glutamine 18 is subject to Pyrrolidone carboxylic acid. Histidine 36 contacts Zn(2+). Cysteine 69 and cysteine 177 are oxidised to a cystine. Glutamate 186 is a binding site for Zn(2+). Cysteine 194 and cysteine 202 are joined by a disulfide.

This sequence belongs to the somatotropin/prolactin family.

The protein resides in the secreted. Its function is as follows. Growth hormone plays an important role in growth control and is involved in the regulation of several anabolic processes. Implicated as an osmoregulatory substance important for seawater adaptation. The protein is Somatotropin (gh) of Sciaenops ocellatus (Red drum).